Reading from the N-terminus, the 547-residue chain is QVQLVQSGAEVRKPGASVRVSCKASGYTFIDSYVGWIRQAPGHGLEWIHWINPNSGGTNYAPRFQGRVTMTRDASFSTAYMDLRSLRSDDSAVFYCAKSDPFWSDYNFDYSSSEEGTEVTYTVSGAWTLPSVFPLTRCCKNIPSNATSVTLGCLATGYFPEPVMVTWDTGSLNGTTLPATTLTLSGHYATISLLTVSGAWAKQMFTCRVAHTPSSTVDNKTFSVCSRDFTPPTVKILQSSCDGLGHFPPTIQLCLVSGYTPGTINITWLEDGQVMDVDLSTASTESQGELASTESQLTLSQKHWLSDRTYTCQVTYQGHTFQDSTKKCADSNPRGVSAYLSRPSPFDLFIRKSPTITCLVVDLAPSKGTVNLTWSRASGKPVNHSTRKEEKQRNGTLTVTSTLPVGTRDWIEGETYQCRVTHPHLPRALMRSTTKTSGPRAAPEVYAFATPEWPGSRDKRTLACLIQNFMPEDISVQWLHNEVQLPDARHSTTQPRKTKGSGFFVFSRLEVTRAEWQEKDEFICRAVHEAASPSQTVQRAVSVNPGK.

Pyrrolidone carboxylic acid is present on Gln1. Ig-like domains are found at residues 1 to 120, 130 to 223, 232 to 329, 333 to 437, and 443 to 542; these read QVQL…TEVT, PSVF…KTFS, PTVK…KKCA, PRGV…TKTS, and PEVY…RAVS. The variable (V) domain, involved in antigen recognition stretch occupies residues 1–124; that stretch reads QVQLVQSGAE…EGTEVTYTVS (124 aa). 6 cysteine pairs are disulfide-bonded: Cys22-Cys96, Cys139-Cys225, Cys153-Cys207, Cys254-Cys312, Cys358-Cys418, and Cys464-Cys524. Positions 125–547 are constant (C) domain; it reads GAWTLPSVFP…QRAVSVNPGK (423 aa). Asn145, Asn173, Asn219, Asn265, Asn371, Asn383, and Asn394 each carry an N-linked (GlcNAc...) asparagine glycan.

As to quaternary structure, immunoglobulins are composed of two identical heavy chains and two identical light chains; disulfide-linked.

The protein localises to the secreted. It is found in the cell membrane. Functionally, immunoglobulins, also known as antibodies, are membrane-bound or secreted glycoproteins produced by B lymphocytes. In the recognition phase of humoral immunity, the membrane-bound immunoglobulins serve as receptors which, upon binding of a specific antigen, trigger the clonal expansion and differentiation of B lymphocytes into immunoglobulins-secreting plasma cells. Secreted immunoglobulins mediate the effector phase of humoral immunity, which results in the elimination of bound antigens. The antigen binding site is formed by the variable domain of one heavy chain, together with that of its associated light chain. Thus, each immunoglobulin has two antigen binding sites with remarkable affinity for a particular antigen. The variable domains are assembled by a process called V-(D)-J rearrangement and can then be subjected to somatic hypermutations which, after exposure to antigen and selection, allow affinity maturation for a particular antigen. The protein is Immunoglobulin epsilon heavy chain of Homo sapiens (Human).